The chain runs to 193 residues: NADH-quinone oxidoreductase subunit B (193 aa).

The span at 1 to 11 shows a compositional bias: polar residues; that stretch reads MGLTGTNTTLV. A disordered region spans residues 1 to 23; the sequence is MGLTGTNTTLVAPQPKGILDPRT. 4 residues coordinate [4Fe-4S] cluster: C72, C73, C137, and C167.

Belongs to the complex I 20 kDa subunit family. In terms of assembly, NDH-1 is composed of 14 different subunits. Subunits NuoB, C, D, E, F, and G constitute the peripheral sector of the complex. [4Fe-4S] cluster serves as cofactor.

The protein localises to the cell inner membrane. The enzyme catalyses a quinone + NADH + 5 H(+)(in) = a quinol + NAD(+) + 4 H(+)(out). Functionally, NDH-1 shuttles electrons from NADH, via FMN and iron-sulfur (Fe-S) centers, to quinones in the respiratory chain. Couples the redox reaction to proton translocation (for every two electrons transferred, four hydrogen ions are translocated across the cytoplasmic membrane), and thus conserves the redox energy in a proton gradient. The chain is NADH-quinone oxidoreductase subunit B from Brucella canis (strain ATCC 23365 / NCTC 10854 / RM-666).